Reading from the N-terminus, the 456-residue chain is Phospholipase A1 member A (456 aa).

A signal peptide spans 1 to 25 (MRPGLWETCFWLWGPLLWLSIGSSG). The Nucleophile role is filled by Ser166. The Charge relay system role is filled by Asp190. Residues Cys245 and Cys258 are joined by a disulfide bond. His260 serves as the catalytic Charge relay system. 2 cysteine pairs are disulfide-bonded: Cys282–Cys293 and Cys296–Cys304. Residue Asn365 is glycosylated (N-linked (GlcNAc...) asparagine).

It belongs to the AB hydrolase superfamily. Lipase family.

Its subcellular location is the secreted. It carries out the reaction a 1,2-diacyl-sn-glycero-3-phospho-L-serine + H2O = a 2-acyl-sn-glycero-3-phospho-L-serine + a fatty acid + H(+). The enzyme catalyses 1,2-di-(9Z)-octadecenoyl-sn-glycero-3-phospho-L-serine + H2O = 2-(9Z-octadecenoyl)-sn-glycero-3-phospho-L-serine + (9Z)-octadecenoate + H(+). It catalyses the reaction 1-hexadecanoyl-2-(5Z,8Z,11Z,14Z-eicosatetraenoyl)-sn-glycero-3-phospho-L-serine + H2O = 2-(5Z,8Z,11Z,14Z)-eicosatetraenoyl-sn-glycero-3-phospho-L-serine + hexadecanoate + H(+). The catalysed reaction is a 1-acyl-sn-glycero-3-phospho-L-serine + H2O = sn-glycero-3-phospho-L-serine + a fatty acid + H(+). It carries out the reaction 1-(9Z-octadecenoyl)-sn-glycero-3-phospho-L-serine + H2O = sn-glycero-3-phospho-L-serine + (9Z)-octadecenoate + H(+). Hydrolyzes the ester bond of the acyl group attached at the sn-1 position of phosphatidylserines (phospholipase A1 activity) and 1-acyl-2-lysophosphatidylserines (lysophospholipase activity) in the pathway of phosphatidylserines acyl chain remodeling. Cleaves phosphatidylserines exposed on the outer leaflet of the plasma membrane of apoptotic cells producing 2-acyl-1-lysophosphatidylserines, which in turn enhance mast cell activation and histamine production. Has no activity toward other glycerophospholipids including phosphatidylcholines, phosphatidylethanolamines, phosphatidic acids or phosphatidylinositols, or glycerolipids such as triolein. This Mus musculus (Mouse) protein is Phospholipase A1 member A.